The primary structure comprises 496 residues: Putative (R)-citramalate synthase CimA (496 aa).

The region spanning 3–253 is the Pyruvate carboxyltransferase domain; it reads VRVLDTTLRD…DTSINIEMLY (251 aa).

This sequence belongs to the alpha-IPM synthase/homocitrate synthase family. As to quaternary structure, homodimer.

It carries out the reaction pyruvate + acetyl-CoA + H2O = (3R)-citramalate + CoA + H(+). It functions in the pathway amino-acid biosynthesis; L-isoleucine biosynthesis; 2-oxobutanoate from pyruvate: step 1/3. Catalyzes the condensation of pyruvate and acetyl-coenzyme A to form (R)-citramalate. This chain is Putative (R)-citramalate synthase CimA, found in Methanothermobacter thermautotrophicus (strain ATCC 29096 / DSM 1053 / JCM 10044 / NBRC 100330 / Delta H) (Methanobacterium thermoautotrophicum).